The chain runs to 261 residues: Cytochrome c oxidase subunit 3 (261 aa).

Residues 1–15 lie on the Mitochondrial matrix side of the membrane; that stretch reads MAHQAHAYHMVDPSP. A helical transmembrane segment spans residues 16–34; the sequence is WPITGATAALLVTSGLAAW. The Mitochondrial intermembrane segment spans residues 35 to 40; the sequence is FHFNSM. The helical transmembrane segment at 41 to 66 threads the bilayer; it reads ILILMGLTLLLLTMYQWWRDIIREST. Residues 67–72 are Mitochondrial matrix-facing; the sequence is FQGHHT. A helical membrane pass occupies residues 73–105; sequence LPVQKSLRYGMILFITSEVFFFLGFFWAFYHSS. Residues 106 to 128 lie on the Mitochondrial intermembrane side of the membrane; sequence LAPTPELGGLWPPTGITPLDPFE. The helical transmembrane segment at 129 to 152 threads the bilayer; sequence VPLLNTAVLLASGITVTWAHHSLM. Over 153–155 the chain is Mitochondrial matrix; the sequence is EGQ. The chain crosses the membrane as a helical span at residues 156–183; it reads RKEAIQSLFITVLLGLYFTALQATEYYE. Residues 184-190 are Mitochondrial intermembrane-facing; it reads SPFTIAD. A helical transmembrane segment spans residues 191 to 223; sequence GAYGSTFFVATGFHGLHVIIGSTFLIVCLVRQT. The Mitochondrial matrix segment spans residues 224 to 232; sequence QYHFTSNHH. A helical transmembrane segment spans residues 233–256; the sequence is FGFEAAAWYWHFVDVVWLFLYVSI. Residues 257 to 261 are Mitochondrial intermembrane-facing; it reads YWWGS.

This sequence belongs to the cytochrome c oxidase subunit 3 family. Component of the cytochrome c oxidase (complex IV, CIV), a multisubunit enzyme composed of 14 subunits. The complex is composed of a catalytic core of 3 subunits MT-CO1, MT-CO2 and MT-CO3, encoded in the mitochondrial DNA, and 11 supernumerary subunits COX4I, COX5A, COX5B, COX6A, COX6B, COX6C, COX7A, COX7B, COX7C, COX8 and NDUFA4, which are encoded in the nuclear genome. The complex exists as a monomer or a dimer and forms supercomplexes (SCs) in the inner mitochondrial membrane with NADH-ubiquinone oxidoreductase (complex I, CI) and ubiquinol-cytochrome c oxidoreductase (cytochrome b-c1 complex, complex III, CIII), resulting in different assemblies (supercomplex SCI(1)III(2)IV(1) and megacomplex MCI(2)III(2)IV(2)).

The protein resides in the mitochondrion inner membrane. It catalyses the reaction 4 Fe(II)-[cytochrome c] + O2 + 8 H(+)(in) = 4 Fe(III)-[cytochrome c] + 2 H2O + 4 H(+)(out). In terms of biological role, component of the cytochrome c oxidase, the last enzyme in the mitochondrial electron transport chain which drives oxidative phosphorylation. The respiratory chain contains 3 multisubunit complexes succinate dehydrogenase (complex II, CII), ubiquinol-cytochrome c oxidoreductase (cytochrome b-c1 complex, complex III, CIII) and cytochrome c oxidase (complex IV, CIV), that cooperate to transfer electrons derived from NADH and succinate to molecular oxygen, creating an electrochemical gradient over the inner membrane that drives transmembrane transport and the ATP synthase. Cytochrome c oxidase is the component of the respiratory chain that catalyzes the reduction of oxygen to water. Electrons originating from reduced cytochrome c in the intermembrane space (IMS) are transferred via the dinuclear copper A center (CU(A)) of subunit 2 and heme A of subunit 1 to the active site in subunit 1, a binuclear center (BNC) formed by heme A3 and copper B (CU(B)). The BNC reduces molecular oxygen to 2 water molecules using 4 electrons from cytochrome c in the IMS and 4 protons from the mitochondrial matrix. The sequence is that of Cytochrome c oxidase subunit 3 (MT-CO3) from Latimeria chalumnae (Coelacanth).